The primary structure comprises 271 residues: Short-chain dehydrogenase ptmH (271 aa).

The NADP(+) site is built by Ile-8, Thr-34, Lys-40, Asp-56, Asn-84, Tyr-148, Lys-152, Val-181, and Thr-183. Tyr-148 (proton acceptor) is an active-site residue. Lys-152 (lowers pKa of active site Tyr) is an active-site residue.

It belongs to the short-chain dehydrogenases/reductases (SDR) family.

Its pathway is secondary metabolite biosynthesis. In terms of biological role, short-chain dehydrogenase; part of the gene cluster that mediates the biosynthesis of the indole diterpenes penitrems. The geranylgeranyl diphosphate (GGPP) synthase ptmG catalyzes the first step in penitrem biosynthesis via conversion of farnesyl pyrophosphate and isopentyl pyrophosphate into geranylgeranyl pyrophosphate (GGPP). Condensation of indole-3-glycerol phosphate with GGPP by the prenyl transferase ptmC then forms 3-geranylgeranylindole (3-GGI). Epoxidation by the FAD-dependent monooxygenase ptmM leads to a epoxidized-GGI that is substrate of the terpene cyclase ptmB for cyclization to yield paspaline. Paspaline is subsequently converted to 13-desoxypaxilline by the cytochrome P450 monooxygenase ptmP, the latter being then converted to paxilline by the cytochrome P450 monooxygenase ptmQ. Paxilline is converted to beta-paxitriol via C-10 ketoreduction by the short-chain dehydrogenase ptmH which can be monoprenylated at the C-20 by the indole diterpene prenyltransferase ptmD. A two-step elimination (acetylation and elimination) process performed by the O-acetyltransferase ptmV and ptmI leads to the production of the prenylated form of penijanthine. The FAD-linked oxidoreductase ptmO then converts the prenylated form of penijanthine into PC-M5 which is in turn transformed into PC-M4 by the aromatic dimethylallyltransferase ptmE. Five sequential oxidative transformations performed by the cytochrome P450 monooxygenases ptmK, ptmU, ptmL, ptmN and ptmJ yield the various penitrem compounds. PtmK, ptmU and ptmM are involved in the formation of the key bicyclic ring of penitrem C via the formation of the intermediates secopenitrem D and penitrem D. PtmL catalyzes the epoxidation of penitrem D and C to yield penitrem B and F, respectively. PtmJ catalyzes the last benzylic hydroxylation to convert penitrem B to prenitrem E and penitrem F to penitrem A. The chain is Short-chain dehydrogenase ptmH from Penicillium ochrochloron.